The sequence spans 182 residues: ATP-dependent protease subunit HslV (182 aa).

Thr10 is a catalytic residue. Na(+)-binding residues include Ala166, Cys169, and Ser172.

This sequence belongs to the peptidase T1B family. HslV subfamily. In terms of assembly, a double ring-shaped homohexamer of HslV is capped on each side by a ring-shaped HslU homohexamer. The assembly of the HslU/HslV complex is dependent on binding of ATP.

It is found in the cytoplasm. It catalyses the reaction ATP-dependent cleavage of peptide bonds with broad specificity.. Allosterically activated by HslU binding. Its function is as follows. Protease subunit of a proteasome-like degradation complex believed to be a general protein degrading machinery. The chain is ATP-dependent protease subunit HslV from Rickettsia bellii (strain OSU 85-389).